The chain runs to 901 residues: HTH-type transcriptional regulator MalT (901 aa).

An ATP-binding site is contributed by 39-46 (SPAGYGKT). The region spanning 829–894 (ELIRTSPLTQ…AAVQHAQKLL (66 aa)) is the HTH luxR-type domain. Residues 853 to 872 (NEQIAGELEVAATTIKTHIR) constitute a DNA-binding region (H-T-H motif).

It belongs to the MalT family. As to quaternary structure, monomer in solution. Oligomerizes to an active state in the presence of the positive effectors ATP and maltotriose.

Its activity is regulated as follows. Activated by ATP and maltotriose, which are both required for DNA binding. Positively regulates the transcription of the maltose regulon whose gene products are responsible for uptake and catabolism of malto-oligosaccharides. Specifically binds to the promoter region of its target genes, recognizing a short DNA motif called the MalT box. The sequence is that of HTH-type transcriptional regulator MalT from Shigella boydii serotype 4 (strain Sb227).